Here is a 354-residue protein sequence, read N- to C-terminus: Guanine nucleotide-binding protein G(t) subunit alpha-3 (354 aa).

Positions 1–27 are disordered; the sequence is MGSGISSESKESAKRSKELEKKLQEDA. Glycine 2 carries N-myristoyl glycine lipidation. Over residues 8–27 the composition is skewed to basic and acidic residues; sequence ESKESAKRSKELEKKLQEDA. Positions 32–354 constitute a G-alpha domain; it reads RTVKLLLLGA…KENLKDCGLF (323 aa). Residues 35–48 are G1 motif; it reads KLLLLGAGESGKST. Residues 40-47, 175-181, 200-204, 269-272, and alanine 326 contribute to the GTP site; these read GAGESGKS, LHSRVKT, DVGGQ, and NKKD. The Mg(2+) site is built by serine 47 and threonine 181. The interval 173–181 is G2 motif; the sequence is DVLHSRVKT. Residues 196-205 are G3 motif; the sequence is FRMFDVGGQR. The segment at 265 to 272 is G4 motif; that stretch reads VLFLNKKD. The G5 motif stretch occupies residues 324–329; it reads TCATDT.

It belongs to the G-alpha family. G(i/o/t/z) subfamily. As to quaternary structure, g proteins are composed of 3 units; alpha, beta and gamma, respectively GNAT3, GNB1 and GNG13 for Gustducin heterotrimer for bitter taste transduction. The alpha chain contains the guanine nucleotide binding site. Component of the TAS2R14-GNAT3 complex, consisting of TAS2R14, GNAT3, GNB1 and GNG2; within the complex interacts with TAS2R14; this complex plays a role in the perception of bitterness. Gustducin heterotrimer may also be composed of GNAT3, GNB3 and GNG13. In terms of processing, potential N-myristoylation may anchor alpha-subunit to the inner surface of plasma membrane. Expressed in taste buds (sensory organs of clustered epithelial cells) of the circumvallate and foliate papillae of the tongue at protein level. Expressed in enteroendocrine L cells of the gut. Detected also in spermatozoa.

The protein resides in the cytoplasm. Guanine nucleotide-binding protein (G protein) alpha subunit playing a prominent role in bitter and sweet taste transduction as well as in umami (monosodium glutamate, monopotassium glutamate, and inosine monophosphate) taste transduction. Transduction by this alpha subunit involves coupling of specific cell-surface receptors with a cGMP-phosphodiesterase; Activation of phosphodiesterase lowers intracellular levels of cAMP and cGMP which may open a cyclic nucleotide-suppressible cation channel leading to influx of calcium, ultimately leading to release of neurotransmitter. Indeed, denatonium and strychnine induce transient reduction in cAMP and cGMP in taste tissue, whereas this decrease is inhibited by GNAT3 antibody. Gustducin heterotrimer transduces response to bitter and sweet compounds via regulation of phosphodiesterase for alpha subunit, as well as via activation of phospholipase C for beta and gamma subunits, with ultimate increase inositol trisphosphate and increase of intracellular Calcium. GNAT3 can functionally couple to taste receptors to transmit intracellular signal: receptor heterodimer TAS1R2/TAS1R3 senses sweetness and TAS1R1/TAS1R3 transduces umami taste, whereas the T2R family GPCRs such as TAS2R14 act as bitter sensors. Also functions as lumenal sugar sensors in the gut to control the expression of the Na+-glucose transporter SGLT1 in response to dietaty sugar, as well as the secretion of Glucagon-like peptide-1, GLP-1 and glucose-dependent insulinotropic polypeptide, GIP. Thus, may modulate the gut capacity to absorb sugars, with implications in malabsorption syndromes and diet-related disorders including diabetes and obesity. The sequence is that of Guanine nucleotide-binding protein G(t) subunit alpha-3 (GNAT3) from Homo sapiens (Human).